A 286-amino-acid chain; its full sequence is Thymidylate synthase (286 aa).

R27 lines the dUMP pocket. Residue H57 participates in (6R)-5,10-methylene-5,6,7,8-tetrahydrofolate binding. DUMP is bound at residue 148-149 (RR). Residue C168 is the Nucleophile of the active site. DUMP-binding positions include 188–191 (RSAD), N199, and 229–231 (HLY). (6R)-5,10-methylene-5,6,7,8-tetrahydrofolate is bound at residue D191. Position 285 (A285) interacts with (6R)-5,10-methylene-5,6,7,8-tetrahydrofolate.

It belongs to the thymidylate synthase family. Bacterial-type ThyA subfamily. Homodimer.

It localises to the cytoplasm. It catalyses the reaction dUMP + (6R)-5,10-methylene-5,6,7,8-tetrahydrofolate = 7,8-dihydrofolate + dTMP. Its pathway is pyrimidine metabolism; dTTP biosynthesis. Catalyzes the reductive methylation of 2'-deoxyuridine-5'-monophosphate (dUMP) to 2'-deoxythymidine-5'-monophosphate (dTMP) while utilizing 5,10-methylenetetrahydrofolate (mTHF) as the methyl donor and reductant in the reaction, yielding dihydrofolate (DHF) as a by-product. This enzymatic reaction provides an intracellular de novo source of dTMP, an essential precursor for DNA biosynthesis. The polypeptide is Thymidylate synthase (Psychrobacter sp. (strain PRwf-1)).